Consider the following 96-residue polypeptide: Putative septation protein SpoVG (96 aa).

It belongs to the SpoVG family.

In terms of biological role, could be involved in septation. In Geobacillus sp. (strain WCH70), this protein is Putative septation protein SpoVG.